The primary structure comprises 435 residues: Fez family zinc finger protein 2 (435 aa).

The Engrailed homology 1 repressor signature appears at 27-42; the sequence is SLAFSIERIMAKTSEP. 6 C2H2-type zinc fingers span residues 254–276, 282–304, 310–332, 338–360, 366–388, and 394–417; these read FTCE…MPVH, FVCK…KIIH, HKCN…IRIH, FVCE…KLTH, YKCT…MHTH, and FTCG…RKLH.

The protein belongs to the krueppel C2H2-type zinc-finger protein family.

The protein localises to the nucleus. In terms of biological role, transcription repressor. Component of the regulatory cascade that controls the development of dopaminergic (DA) and serotonergic (5HT) neurons. This Xenopus tropicalis (Western clawed frog) protein is Fez family zinc finger protein 2 (fezf2).